We begin with the raw amino-acid sequence, 236 residues long: MIREKFAYRETITTILADDTSHVEAAKGGMIAARTGVEEYLLTDPFFQMSYSPVSAPADAPESVRCMAAASFEADVGPMAAVAATIGWAGVKAMQNRGAAFGLIDNGGDIVLFSNRELRVGIYAGPAPSSGKFAFLITPQTEILGICTSSATVGPSVSFGIADSVTCFSHDPAKADAWATGLCNILTPENFDKVMKKVEESSVFAVYAVIGDWIGRWGDLPEIVPAHVSYDLITKG.

Belongs to the UPF0280 family.

The sequence is that of UPF0280 protein Mlab_0453 from Methanocorpusculum labreanum (strain ATCC 43576 / DSM 4855 / Z).